A 448-amino-acid chain; its full sequence is Exodeoxyribonuclease 7 large subunit (448 aa).

The protein belongs to the XseA family. In terms of assembly, heterooligomer composed of large and small subunits.

Its subcellular location is the cytoplasm. It catalyses the reaction Exonucleolytic cleavage in either 5'- to 3'- or 3'- to 5'-direction to yield nucleoside 5'-phosphates.. Functionally, bidirectionally degrades single-stranded DNA into large acid-insoluble oligonucleotides, which are then degraded further into small acid-soluble oligonucleotides. The polypeptide is Exodeoxyribonuclease 7 large subunit (Bacillus pumilus (strain SAFR-032)).